A 445-amino-acid chain; its full sequence is Flagellum-associated coiled-coil domain-containing protein 1 (445 aa).

The disordered stretch occupies residues 26 to 47; that stretch reads PQLPRKNSTGSSKLTPLVPAPK. Residues 30–39 are compositionally biased toward polar residues; that stretch reads RKNSTGSSKL. Coiled coils occupy residues 122 to 226 and 283 to 315; these read SRTN…TYQD and AVFE…TKEV. N6-acetyllysine is present on Lys-376. Residues 387 to 414 are a coiled coil; sequence EKYKHTIQILTEENIHLKQKIISKNEEI.

It localises to the cytoplasm. The protein resides in the cytoplasmic granule. Its subcellular location is the cell projection. The protein localises to the cilium. It is found in the flagellum. The protein is Flagellum-associated coiled-coil domain-containing protein 1 of Homo sapiens (Human).